Consider the following 459-residue polypeptide: NADP-specific glutamate dehydrogenase (459 aa).

Lys116 is a catalytic residue.

It belongs to the Glu/Leu/Phe/Val dehydrogenases family. Homohexamer.

The catalysed reaction is L-glutamate + NADP(+) + H2O = 2-oxoglutarate + NH4(+) + NADPH + H(+). The chain is NADP-specific glutamate dehydrogenase (GDHA) from Schwanniomyces occidentalis (Yeast).